We begin with the raw amino-acid sequence, 274 residues long: Serine/threonine-protein kinase 1 (274 aa).

The Protein kinase domain maps to 17 to 265 (ARTALHLVNG…YEVIQKNTYW (249 aa)). ATP contacts are provided by residues 23–31 (LVNGKFGKV) and lysine 46. The active-site Proton acceptor is aspartate 133.

It belongs to the protein kinase superfamily. Ser/Thr protein kinase family.

It catalyses the reaction L-seryl-[protein] + ATP = O-phospho-L-seryl-[protein] + ADP + H(+). The catalysed reaction is L-threonyl-[protein] + ATP = O-phospho-L-threonyl-[protein] + ADP + H(+). Its function is as follows. In vitro, can phosphorylate histone H1. The sequence is that of Serine/threonine-protein kinase 1 (PK1) from Lymantria dispar multicapsid nuclear polyhedrosis virus (LdMNPV).